A 292-amino-acid chain; its full sequence is Cytidine deaminase (292 aa).

2 consecutive CMP/dCMP-type deaminase domains span residues 47-167 and 186-292; these read TPLK…FGPK and DHQD…YYSL. Residue 88-90 coordinates substrate; that stretch reads NQE. A Zn(2+)-binding site is contributed by H101. E103 (proton donor) is an active-site residue. Zn(2+)-binding residues include C128 and C131.

It belongs to the cytidine and deoxycytidylate deaminase family. In terms of assembly, homodimer. Zn(2+) serves as cofactor.

It catalyses the reaction cytidine + H2O + H(+) = uridine + NH4(+). The catalysed reaction is 2'-deoxycytidine + H2O + H(+) = 2'-deoxyuridine + NH4(+). This enzyme scavenges exogenous and endogenous cytidine and 2'-deoxycytidine for UMP synthesis. This Haemophilus influenzae (strain PittEE) protein is Cytidine deaminase.